A 114-amino-acid polypeptide reads, in one-letter code: T cell receptor beta variable 6-5 (114 aa).

The signal sequence occupies residues 1–21 (MSIGLLCCAALSLLWAGPVNA). Residues 22 to 114 (GVTQTPKFQV…TSVYFCASSY (93 aa)) enclose the Ig-like domain. Residues C42 and C110 are joined by a disulfide bond. N84 carries N-linked (GlcNAc...) asparagine glycosylation.

Alpha-beta TR is a heterodimer composed of an alpha and beta chain; disulfide-linked. The alpha-beta TR is associated with the transmembrane signaling CD3 coreceptor proteins to form the TR-CD3 (TcR or TCR). The assembly of alpha-beta TR heterodimers with CD3 occurs in the endoplasmic reticulum where a single alpha-beta TR heterodimer associates with one CD3D-CD3E heterodimer, one CD3G-CD3E heterodimer and one CD247 homodimer forming a stable octameric structure. CD3D-CD3E and CD3G-CD3E heterodimers preferentially associate with TR alpha and TR beta chains, respectively. The association of the CD247 homodimer is the last step of TcR assembly in the endoplasmic reticulum and is required for transport to the cell surface.

It localises to the cell membrane. In terms of biological role, v region of the variable domain of T cell receptor (TR) beta chain that participates in the antigen recognition. Alpha-beta T cell receptors are antigen specific receptors which are essential to the immune response and are present on the cell surface of T lymphocytes. Recognize peptide-major histocompatibility (MH) (pMH) complexes that are displayed by antigen presenting cells (APC), a prerequisite for efficient T cell adaptive immunity against pathogens. Binding of alpha-beta TR to pMH complex initiates TR-CD3 clustering on the cell surface and intracellular activation of LCK that phosphorylates the ITAM motifs of CD3G, CD3D, CD3E and CD247 enabling the recruitment of ZAP70. In turn ZAP70 phosphorylates LAT, which recruits numerous signaling molecules to form the LAT signalosome. The LAT signalosome propagates signal branching to three major signaling pathways, the calcium, the mitogen-activated protein kinase (MAPK) kinase and the nuclear factor NF-kappa-B (NF-kB) pathways, leading to the mobilization of transcription factors that are critical for gene expression and essential for T cell growth and differentiation. The T cell repertoire is generated in the thymus, by V-(D)-J rearrangement. This repertoire is then shaped by intrathymic selection events to generate a peripheral T cell pool of self-MH restricted, non-autoaggressive T cells. Post-thymic interaction of alpha-beta TR with the pMH complexes shapes TR structural and functional avidity. The polypeptide is T cell receptor beta variable 6-5 (Homo sapiens (Human)).